Here is a 161-residue protein sequence, read N- to C-terminus: Protein-export protein SecB (161 aa).

Belongs to the SecB family. In terms of assembly, homotetramer, a dimer of dimers. One homotetramer interacts with 1 SecA dimer.

The protein resides in the cytoplasm. In terms of biological role, one of the proteins required for the normal export of preproteins out of the cell cytoplasm. It is a molecular chaperone that binds to a subset of precursor proteins, maintaining them in a translocation-competent state. It also specifically binds to its receptor SecA. The polypeptide is Protein-export protein SecB (Shewanella sp. (strain MR-7)).